A 360-amino-acid chain; its full sequence is Phospho-N-acetylmuramoyl-pentapeptide-transferase (360 aa).

A run of 10 helical transmembrane segments spans residues 27-47 (GAIA…IKSL), 72-92 (TPTM…LLWA), 94-114 (LSNH…AIGF), 135-155 (LACE…LGTP), 167-187 (GYVV…IVAS), 199-219 (GLAI…AYLV), 236-256 (AGEL…FLWF), 263-283 (IFMG…IAVA), 289-309 (VLAI…VQVV), and 337-357 (QVVV…LSTL).

This sequence belongs to the glycosyltransferase 4 family. MraY subfamily. Mg(2+) serves as cofactor.

Its subcellular location is the cell inner membrane. The enzyme catalyses UDP-N-acetyl-alpha-D-muramoyl-L-alanyl-gamma-D-glutamyl-meso-2,6-diaminopimeloyl-D-alanyl-D-alanine + di-trans,octa-cis-undecaprenyl phosphate = di-trans,octa-cis-undecaprenyl diphospho-N-acetyl-alpha-D-muramoyl-L-alanyl-D-glutamyl-meso-2,6-diaminopimeloyl-D-alanyl-D-alanine + UMP. The protein operates within cell wall biogenesis; peptidoglycan biosynthesis. In terms of biological role, catalyzes the initial step of the lipid cycle reactions in the biosynthesis of the cell wall peptidoglycan: transfers peptidoglycan precursor phospho-MurNAc-pentapeptide from UDP-MurNAc-pentapeptide onto the lipid carrier undecaprenyl phosphate, yielding undecaprenyl-pyrophosphoryl-MurNAc-pentapeptide, known as lipid I. This Beijerinckia indica subsp. indica (strain ATCC 9039 / DSM 1715 / NCIMB 8712) protein is Phospho-N-acetylmuramoyl-pentapeptide-transferase.